Reading from the N-terminus, the 359-residue chain is 3-dehydroquinate synthase (359 aa).

Residues 72-77 (EGEIHK), 106-110 (GVIGD), 130-131 (TS), K143, K152, and 170-173 (CLKT) each bind NAD(+). Zn(2+)-binding residues include E185, H248, and H264.

Belongs to the sugar phosphate cyclases superfamily. Dehydroquinate synthase family. The cofactor is Co(2+). It depends on Zn(2+) as a cofactor. NAD(+) serves as cofactor.

The protein localises to the cytoplasm. It catalyses the reaction 7-phospho-2-dehydro-3-deoxy-D-arabino-heptonate = 3-dehydroquinate + phosphate. Its pathway is metabolic intermediate biosynthesis; chorismate biosynthesis; chorismate from D-erythrose 4-phosphate and phosphoenolpyruvate: step 2/7. In terms of biological role, catalyzes the conversion of 3-deoxy-D-arabino-heptulosonate 7-phosphate (DAHP) to dehydroquinate (DHQ). The protein is 3-dehydroquinate synthase of Dehalococcoides mccartyi (strain CBDB1).